A 122-amino-acid chain; its full sequence is Basic phospholipase A2 LmTX-I (122 aa).

Intrachain disulfides connect cysteine 26-cysteine 115, cysteine 28-cysteine 44, cysteine 43-cysteine 95, cysteine 49-cysteine 122, cysteine 50-cysteine 88, and cysteine 75-cysteine 86. Ca(2+) contacts are provided by tyrosine 27, glycine 29, and glycine 31. Histidine 47 is an active-site residue. Aspartate 48 provides a ligand contact to Ca(2+). Residue aspartate 89 is part of the active site.

Monomer. Ca(2+) serves as cofactor. In terms of tissue distribution, expressed by the venom gland.

It localises to the secreted. The enzyme catalyses a 1,2-diacyl-sn-glycero-3-phosphocholine + H2O = a 1-acyl-sn-glycero-3-phosphocholine + a fatty acid + H(+). With respect to regulation, inhibited by Mn(2+), Mg(2+), Zn(2+) and Cu(2+). In terms of biological role, snake venom phospholipase A2 (PLA2) that displays neurotoxic and myotoxic activities. Induces inflammatory edema by mechanisms involving mast cell activation and arachidonic acid metabolites. Increases plasma creatine kinase activity. PLA2 catalyzes the calcium-dependent hydrolysis of the 2-acyl groups in 3-sn-phosphoglycerides. The protein is Basic phospholipase A2 LmTX-I of Lachesis muta muta (Bushmaster).